Reading from the N-terminus, the 254-residue chain is HTH-type transcriptional regulator GlvR (254 aa).

Residues methionine 1–glutamate 77 enclose the HTH rpiR-type domain. Positions isoleucine 37–glutamine 56 form a DNA-binding region, H-T-H motif. The SIS domain occupies methionine 106–alanine 248.

In terms of biological role, positive regulator of the glv operon expression, which consists of GlvA, GlvR and GlvC. The polypeptide is HTH-type transcriptional regulator GlvR (glvR) (Bacillus subtilis (strain 168)).